The chain runs to 845 residues: Alanine--tRNA ligase (845 aa).

Positions 552, 556, 653, and 657 each coordinate Zn(2+).

It belongs to the class-II aminoacyl-tRNA synthetase family. Requires Zn(2+) as cofactor.

The protein localises to the cytoplasm. It catalyses the reaction tRNA(Ala) + L-alanine + ATP = L-alanyl-tRNA(Ala) + AMP + diphosphate. In terms of biological role, catalyzes the attachment of alanine to tRNA(Ala) in a two-step reaction: alanine is first activated by ATP to form Ala-AMP and then transferred to the acceptor end of tRNA(Ala). Also edits incorrectly charged Ser-tRNA(Ala) and Gly-tRNA(Ala) via its editing domain. This Campylobacter hominis (strain ATCC BAA-381 / DSM 21671 / CCUG 45161 / LMG 19568 / NCTC 13146 / CH001A) protein is Alanine--tRNA ligase.